The chain runs to 150 residues: Transcriptional regulator MraZ (150 aa).

SpoVT-AbrB domains lie at 9-54 and 83-126; these read QSIH…PPEE and AEEC…NKST.

It belongs to the MraZ family. As to quaternary structure, forms oligomers.

It is found in the cytoplasm. Its subcellular location is the nucleoid. In Syntrophobacter fumaroxidans (strain DSM 10017 / MPOB), this protein is Transcriptional regulator MraZ.